Here is a 556-residue protein sequence, read N- to C-terminus: Formate--tetrahydrofolate ligase (556 aa).

Residue threonine 65–serine 72 participates in ATP binding.

This sequence belongs to the formate--tetrahydrofolate ligase family.

It catalyses the reaction (6S)-5,6,7,8-tetrahydrofolate + formate + ATP = (6R)-10-formyltetrahydrofolate + ADP + phosphate. The protein operates within one-carbon metabolism; tetrahydrofolate interconversion. This is Formate--tetrahydrofolate ligase from Clostridium perfringens (strain 13 / Type A).